A 505-amino-acid chain; its full sequence is Monocarboxylate transporter 6 (505 aa).

At 1–17 (MPQALERADGSWAWVVL) the chain is on the cytoplasmic side. Residues 18–38 (LATMVTQGLTLGFPTCIGIFF) form a helical membrane-spanning segment. Topologically, residues 39–53 (TELQWEFQASNSETS) are extracellular. A helical transmembrane segment spans residues 54-74 (WFPSILTAVLHMAGPLCSILV). At 75 to 80 (GRFGCR) the chain is on the cytoplasmic side. Residues 81-101 (VTVMLGGVLASLGMVASSFSH) form a helical membrane-spanning segment. The Extracellular portion of the chain corresponds to 102–110 (NLSQLYFTA). Residues 111–131 (GFITGLGMCFSFQSSITVLGF) form a helical membrane-spanning segment. The Cytoplasmic segment spans residues 132-137 (YFVRRR). Residues 138-158 (VLANALASMGVSLGITLWPLL) traverse the membrane as a helical segment. At 159–171 (SRYLLENLGWRGT) the chain is on the extracellular side. The helical transmembrane segment at 172-192 (FLVFGGIFLHCCICGAIIRPV) threads the bilayer. At 193-239 (ATSVAPETKECPPPPPETPALGCLAACGRTIQRHLAFDILRHNTGYC) the chain is on the cytoplasmic side. The chain crosses the membrane as a helical span at residues 240 to 260 (VYILGVMWSVLGFPLPQVFLV). Topologically, residues 261–274 (PYAMWHSVDEQQAA) are extracellular. Residues 275–295 (LLISIIGFSNIFLRPLAGLMA) form a helical membrane-spanning segment. The Cytoplasmic segment spans residues 296 to 305 (GRPAFASHRK). The helical transmembrane segment at 306 to 326 (YLFSLALLLNGLTNLVCAASG) threads the bilayer. Residues 327–329 (DFW) are Extracellular-facing. The chain crosses the membrane as a helical span at residues 330–350 (VLVGYCLAYSVSMSGIGALIF). Over 351–367 (QVLMDIVPMDQFPRALG) the chain is Cytoplasmic. Residues 368 to 388 (LFTVLDGLAFLISPPLAGLLL) form a helical membrane-spanning segment. Residues 389–396 (DATNNFSY) are Extracellular-facing. The chain crosses the membrane as a helical span at residues 397–417 (VFYMSSFFLISAALFMGGSFY). The Cytoplasmic segment spans residues 418-505 (ALQKKEQGKQ…QTALGWNSPT (88 aa)). The segment at 443-464 (KDGPGKQRSPEIMCQSSRQPRP) is disordered.

Belongs to the major facilitator superfamily. Monocarboxylate porter (TC 2.A.1.13) family. As to expression, highly expressed in kidney.

It localises to the cell membrane. In terms of biological role, proton-linked monocarboxylate transporter. Catalyzes the rapid transport across the plasma membrane of many monocarboxylates such as lactate, pyruvate, branched-chain oxo acids derived from leucine, valine and isoleucine, and the ketone bodies acetoacetate, beta-hydroxybutyrate and acetate. The protein is Monocarboxylate transporter 6 (SLC16A5) of Homo sapiens (Human).